The chain runs to 429 residues: Serine--tRNA ligase (429 aa).

Thr-235 to Glu-237 serves as a coordination point for L-serine. Residue Arg-266 to Glu-268 participates in ATP binding. Glu-289 lines the L-serine pocket. Glu-353 to Ser-356 is an ATP binding site. Position 389 (Ser-389) interacts with L-serine.

This sequence belongs to the class-II aminoacyl-tRNA synthetase family. Type-1 seryl-tRNA synthetase subfamily. As to quaternary structure, homodimer. The tRNA molecule binds across the dimer.

It is found in the cytoplasm. The enzyme catalyses tRNA(Ser) + L-serine + ATP = L-seryl-tRNA(Ser) + AMP + diphosphate + H(+). It catalyses the reaction tRNA(Sec) + L-serine + ATP = L-seryl-tRNA(Sec) + AMP + diphosphate + H(+). It participates in aminoacyl-tRNA biosynthesis; selenocysteinyl-tRNA(Sec) biosynthesis; L-seryl-tRNA(Sec) from L-serine and tRNA(Sec): step 1/1. Its function is as follows. Catalyzes the attachment of serine to tRNA(Ser). Is also able to aminoacylate tRNA(Sec) with serine, to form the misacylated tRNA L-seryl-tRNA(Sec), which will be further converted into selenocysteinyl-tRNA(Sec). This Haemophilus influenzae (strain 86-028NP) protein is Serine--tRNA ligase.